The primary structure comprises 447 residues: uncharacterized protein (447 aa).

The next 3 helical transmembrane spans lie at 28-48 (IVIV…YPAV), 241-261 (IDAS…YYAI), and 397-417 (PFVL…LSIF).

Its subcellular location is the membrane. This is an uncharacterized protein from Schizosaccharomyces pombe (strain 972 / ATCC 24843) (Fission yeast).